The following is a 136-amino-acid chain: Putative pre-16S rRNA nuclease (136 aa).

This sequence belongs to the YqgF nuclease family.

It localises to the cytoplasm. Could be a nuclease involved in processing of the 5'-end of pre-16S rRNA. This Francisella philomiragia subsp. philomiragia (strain ATCC 25017 / CCUG 19701 / FSC 153 / O#319-036) protein is Putative pre-16S rRNA nuclease.